Consider the following 545-residue polypeptide: Arginine-containing cyclodipeptide synthase ateA (545 aa).

The span at 390–425 shows a compositional bias: polar residues; the sequence is GNQQTPTQSADMDSTVSHRQQQPASSRSYTSKQNQM. The interval 390-433 is disordered; sequence GNQQTPTQSADMDSTVSHRQQQPASSRSYTSKQNQMPRPLVISV. Residues 434–438 carry the Conserved DDXXE motif motif; it reads DDPSE.

The protein belongs to the arginine-containing cyclodipeptide synthase family.

It catalyses the reaction L-glutamyl-tRNA(Glu) + L-arginyl-tRNA(Arg) = cyclo(L-arginyl-L-glutamyl) + tRNA(Glu) + tRNA(Arg) + 2 H(+). Its pathway is secondary metabolite biosynthesis. Its function is as follows. Arginine-containing cyclodipeptide synthase; part of the cluster that mediates the biosynthesis of a highly modified cyclo-arginine-glutamate dipeptide (cRE). Within the pathway, ateA acts as the scaffold-generating enzyme and is responsible for formation of the cyclo-Arg-Glu diketopiperazine (cRW) from L-arginyl-tRNA(Arg) + L-glutamyl-tRNA(Glu). Additional enzymes from the cluster then further modify the cyclo-Arg-Glu diketopiperazine (cRW) scaffold. The polypeptide is Arginine-containing cyclodipeptide synthase ateA (Aspergillus terreus).